The following is a 313-amino-acid chain: 2,3-dihydroxyphenylpropionate/2,3-dihydroxicinnamic acid 1,2-dioxygenase (313 aa).

The active-site Proton donor is His115. The active-site Proton acceptor is His179.

This sequence belongs to the LigB/MhpB extradiol dioxygenase family. As to quaternary structure, homotetramer. Fe(2+) is required as a cofactor.

The catalysed reaction is 3-(2,3-dihydroxyphenyl)propanoate + O2 = (2Z,4E)-2-hydroxy-6-oxonona-2,4-dienedioate + H(+). The enzyme catalyses (2E)-3-(2,3-dihydroxyphenyl)prop-2-enoate + O2 = (2Z,4E,7E)-2-hydroxy-6-oxonona-2,4,7-trienedioate + H(+). Its pathway is aromatic compound metabolism; 3-phenylpropanoate degradation. Functionally, catalyzes the non-heme iron(II)-dependent oxidative cleavage of 2,3-dihydroxyphenylpropionic acid and 2,3-dihydroxicinnamic acid into 2-hydroxy-6-ketononadienedioate and 2-hydroxy-6-ketononatrienedioate, respectively. The polypeptide is 2,3-dihydroxyphenylpropionate/2,3-dihydroxicinnamic acid 1,2-dioxygenase (Xanthobacter autotrophicus (strain ATCC BAA-1158 / Py2)).